The chain runs to 399 residues: Stearoyl-[acyl-carrier-protein] 9-desaturase, seed specific, chloroplastic (399 aa).

The transit peptide at 1–34 directs the protein to the chloroplast; it reads MALKFNPLVSQPYKLASSARPPVSTFRSPKFLCL. The Fe cation site is built by Glu-141, Glu-179, His-182, Glu-232, Glu-265, and His-268.

The protein belongs to the fatty acid desaturase type 2 family. As to quaternary structure, homodimer. Fe(2+) serves as cofactor. Developing seeds.

Its subcellular location is the plastid. The protein resides in the chloroplast. It catalyses the reaction octadecanoyl-[ACP] + 2 reduced [2Fe-2S]-[ferredoxin] + O2 + 2 H(+) = (9Z)-octadecenoyl-[ACP] + 2 oxidized [2Fe-2S]-[ferredoxin] + 2 H2O. It functions in the pathway lipid metabolism; fatty acid metabolism. Functionally, converts stearoyl-ACP to oleoyl-ACP by introduction of a cis double bond between carbons Delta(9) and Delta(10) of the acyl chain. The sequence is that of Stearoyl-[acyl-carrier-protein] 9-desaturase, seed specific, chloroplastic from Brassica napus (Rape).